We begin with the raw amino-acid sequence, 220 residues long: Ribosomal RNA large subunit methyltransferase E (220 aa).

5 residues coordinate S-adenosyl-L-methionine: Gly64, Trp66, Asp84, Asp100, and Asp125. Catalysis depends on Lys165, which acts as the Proton acceptor.

The protein belongs to the class I-like SAM-binding methyltransferase superfamily. RNA methyltransferase RlmE family.

The protein resides in the cytoplasm. It carries out the reaction uridine(2552) in 23S rRNA + S-adenosyl-L-methionine = 2'-O-methyluridine(2552) in 23S rRNA + S-adenosyl-L-homocysteine + H(+). Specifically methylates the uridine in position 2552 of 23S rRNA at the 2'-O position of the ribose in the fully assembled 50S ribosomal subunit. In Thiobacillus denitrificans (strain ATCC 25259 / T1), this protein is Ribosomal RNA large subunit methyltransferase E.